A 298-amino-acid polypeptide reads, in one-letter code: Protease HtpX (298 aa).

The next 2 membrane-spanning stretches (helical) occupy residues isoleucine 4–leucine 24 and threonine 41–isoleucine 61. Residue histidine 147 coordinates Zn(2+). Glutamate 148 is an active-site residue. Histidine 151 lines the Zn(2+) pocket. The next 2 membrane-spanning stretches (helical) occupy residues leucine 162–isoleucine 182 and glycine 193–alanine 213. Glutamate 225 contacts Zn(2+).

It belongs to the peptidase M48B family. Zn(2+) is required as a cofactor.

The protein resides in the cell inner membrane. The chain is Protease HtpX from Alcanivorax borkumensis (strain ATCC 700651 / DSM 11573 / NCIMB 13689 / SK2).